The sequence spans 521 residues: D-aminoacyl-tRNA deacylase (521 aa).

Disordered stretches follow at residues 323 to 353 and 499 to 521; these read AVGT…SEDS and VFST…SSSS. The segment covering 343–353 has biased composition (basic and acidic residues); it reads VDAERTESEDS. The segment covering 501-521 has biased composition (low complexity); the sequence is STSSSSSSSSSSSSSSSSSSS.

This sequence belongs to the DtdA deacylase family. As to quaternary structure, monomer. It depends on Zn(2+) as a cofactor.

It carries out the reaction a D-aminoacyl-tRNA + H2O = a tRNA + a D-alpha-amino acid + H(+). It catalyses the reaction glycyl-tRNA(Ala) + H2O = tRNA(Ala) + glycine + H(+). Functionally, D-aminoacyl-tRNA deacylase with broad substrate specificity. By recycling D-aminoacyl-tRNA to D-amino acids and free tRNA molecules, this enzyme counteracts the toxicity associated with the formation of D-aminoacyl-tRNA entities in vivo. The polypeptide is D-aminoacyl-tRNA deacylase (Haloquadratum walsbyi (strain DSM 16790 / HBSQ001)).